We begin with the raw amino-acid sequence, 656 residues long: Receptor-type tyrosine-protein phosphatase R (656 aa).

The N-terminal stretch at 1–23 (MRRAVGFPALCLLLNLHAAGCFS) is a signal peptide. O-linked (Xyl...) (chondroitin sulfate) serine glycosylation occurs at S23. The Extracellular portion of the chain corresponds to 24-226 (RNNDHFLAIR…EADKIWSKEG (203 aa)). N128 is a glycosylation site (N-linked (GlcNAc...) asparagine). The helical transmembrane segment at 227–247 (FYAVVIFLSIFIIIVTCLMII) threads the bilayer. Residues 248–656 (YRLKERLQLS…ESRLSPETVE (409 aa)) are Cytoplasmic-facing. A disordered region spans residues 269-289 (HLSPIARQQAQSEAKTTHSMV). The residue at position 271 (S271) is a Phosphoserine. Positions 274-289 (ARQQAQSEAKTTHSMV) are enriched in polar residues. Residue S338 is modified to Phosphoserine; by PKA. In terms of domain architecture, Tyrosine-protein phosphatase spans 392-646 (LQSEFMEIPM…EFVHHALCLF (255 aa)). Residues D553, 587–593 (CSAGIGR), and Q631 each bind substrate. The active-site Phosphocysteine intermediate is C587.

The protein belongs to the protein-tyrosine phosphatase family. Receptor class 7 subfamily. In terms of assembly, interacts with MAPKs. Expressed in the heart, brain, spleen, lung, liver, skeletal muscle, kidney and testis. Isoform alpha is expressed throughout the granular layer of the cerebellar but not within the Purkinje cells, also in the villi of the ileum and jejunum and both the villi and crypts of the duodenum. Isoform beta is expressed only in the Purkinje cells. Isoform gamma is expressed throughout the brain, the villi and crypts of the duodenum, jejunum and ileum and expressed at low levels in the proximal colon.

It localises to the cell membrane. The protein localises to the cytoplasm. The enzyme catalyses O-phospho-L-tyrosyl-[protein] + H2O = L-tyrosyl-[protein] + phosphate. Sequesters mitogen-activated protein kinases (MAPKs) such as MAPK1, MAPK3 and MAPK14 in the cytoplasm in an inactive form. The MAPKs bind to a dephosphorylated kinase interacting motif, phosphorylation of which by the protein kinase A complex releases the MAPKs for activation and translocation into the nucleus. Isoform gamma may have a role in patterning and cellular proliferation of skeletal elements in the precartilaginous/cartilaginous skeleton. This Mus musculus (Mouse) protein is Receptor-type tyrosine-protein phosphatase R (Ptprr).